A 247-amino-acid polypeptide reads, in one-letter code: Small ribosomal subunit protein uS2 (247 aa).

It belongs to the universal ribosomal protein uS2 family.

The sequence is that of Small ribosomal subunit protein uS2 from Pseudomonas syringae pv. tomato (strain ATCC BAA-871 / DC3000).